Reading from the N-terminus, the 209-residue chain is Ribonuclease HII (209 aa).

Residues 7–198 (GPVAGVDEAG…VAKAHQEWLH (192 aa)) form the RNase H type-2 domain. 3 residues coordinate a divalent metal cation: aspartate 13, glutamate 14, and aspartate 107.

Belongs to the RNase HII family. Mn(2+) is required as a cofactor. Requires Mg(2+) as cofactor.

It localises to the cytoplasm. The enzyme catalyses Endonucleolytic cleavage to 5'-phosphomonoester.. Its function is as follows. Endonuclease that specifically degrades the RNA of RNA-DNA hybrids. This chain is Ribonuclease HII, found in Corynebacterium glutamicum (strain R).